The primary structure comprises 135 residues: Transcription antitermination protein NusB (135 aa).

Belongs to the NusB family.

Functionally, involved in transcription antitermination. Required for transcription of ribosomal RNA (rRNA) genes. Binds specifically to the boxA antiterminator sequence of the ribosomal RNA (rrn) operons. The sequence is that of Transcription antitermination protein NusB from Lacticaseibacillus paracasei (strain ATCC 334 / BCRC 17002 / CCUG 31169 / CIP 107868 / KCTC 3260 / NRRL B-441) (Lactobacillus paracasei).